We begin with the raw amino-acid sequence, 1220 residues long: Formin-F (1220 aa).

Positions 1 to 10 are enriched in basic residues; it reads MNRIFGRKKK. Residues 1-62 are disordered; the sequence is MNRIFGRKKK…TNSKSADKFD (62 aa). Positions 6–373 constitute a GBD/FH3 domain; the sequence is GRKKKDKDSD…QISVNKPMIG (368 aa). The segment covering 11–20 has biased composition (basic and acidic residues); it reads DKDSDEKGST. A compositionally biased stretch (polar residues) spans 41-56; that stretch reads AYSSLQPDGNNSTNSK. A coiled-coil region spans residues 392 to 428; it reads VALQSEFQKNIEELAKVKDQLKKANFDLNIANQELSS. 3 disordered regions span residues 461–659, 711–732, and 1049–1192; these read IDSN…KFTV, SQKK…GTVS, and DEAK…KKDI. Low complexity-rich tracts occupy residues 501–518 and 525–554; these read SKPP…SSSQ and SNLS…PQQQ. Residues 532 to 655 enclose the FH1 domain; that stretch reads SDSLSNDFKS…NSNKPPANAP (124 aa). A compositionally biased stretch (polar residues) spans 555–564; it reads NIESTLTPEP. Residues 575-638 are compositionally biased toward pro residues; that stretch reads TTPPPAPPAP…GKGGPPPPPG (64 aa). Residues 656 to 1054 enclose the FH2 domain; sequence KFTVSKPTTK…AIKRDEAKAK (399 aa). The segment covering 711–722 has biased composition (basic and acidic residues); sequence SQKKLEASDKKS. The stretch at 1032–1062 forms a coiled coil; that stretch reads YKDFQRDKEAAERAIKRDEAKAKKAQQLKRM. The span at 1066-1083 shows a compositional bias: polar residues; the sequence is IASSTNNKNPLASSSTSV. Positions 1083–1158 constitute a DAD domain; that stretch reads VGDGGMVEDI…TPSKSGSRRE (76 aa). Low complexity predominate over residues 1117 to 1142; the sequence is DSSSITTISEQSENSNTSSITITTPS. Over residues 1161 to 1192 the composition is skewed to basic and acidic residues; the sequence is TSKSSDKDKEKEKEKEKQCESTESEDINKKDI.

Belongs to the formin homology family. Diaphanous subfamily. In terms of assembly, interacts (via GBD/FH3 domain) with activated Rho-GTPases.

Functionally, formins play an important role in the nucleation of actin and the formation of linear actin filaments. This Dictyostelium discoideum (Social amoeba) protein is Formin-F (forF).